The primary structure comprises 337 residues: Transcription factor HBI1 (337 aa).

The disordered stretch occupies residues 119–180 (VALKNKRKPE…SKGASENQKL (62 aa)). Residues 126–151 (KPEVKTREEQKTEKKIKVEAETESSM) show a composition bias toward basic and acidic residues. The span at 152–165 (KGKSNMGNTEASSD) shows a compositional bias: polar residues. The bHLH domain occupies 191–241 (QATDRHSLAERARREKISKKMKYLQDIVPGCNKVTGKAGMLDEIINYVQCL).

In terms of assembly, homodimer. Interacts with IBH1. As to expression, highly expressed in hypocotyls and cotyledons. Expressed in leaves, stems, and flowers.

The protein localises to the nucleus. Atypical bHLH transcription factor that acts as a positive regulator of cell elongation downstream of multiple external and endogenous signals by direct binding to the promoters and activation of the two expansin genes EXPA1 and EXPA8, encoding cell wall loosening enzymes. Transcriptional activity is inhibited when binding to the bHLH transcription factor IBH1. This is Transcription factor HBI1 (HBI1) from Arabidopsis thaliana (Mouse-ear cress).